The primary structure comprises 240 residues: uncharacterized protein (240 aa).

Aspartate 66 functions as the Proton acceptor in the catalytic mechanism. Aspartate 129 is a catalytic residue. Histidine 131 functions as the Proton acceptor in the catalytic mechanism.

The protein belongs to the glucosamine/galactosamine-6-phosphate isomerase family.

This is an uncharacterized protein from Escherichia coli (strain K12).